The sequence spans 745 residues: 1,4-alpha-glucan branching enzyme GlgB (745 aa).

Asp-416 acts as the Nucleophile in catalysis. Glu-469 functions as the Proton donor in the catalytic mechanism.

Belongs to the glycosyl hydrolase 13 family. GlgB subfamily. Monomer.

The catalysed reaction is Transfers a segment of a (1-&gt;4)-alpha-D-glucan chain to a primary hydroxy group in a similar glucan chain.. Its pathway is glycan biosynthesis; glycogen biosynthesis. In terms of biological role, catalyzes the formation of the alpha-1,6-glucosidic linkages in glycogen by scission of a 1,4-alpha-linked oligosaccharide from growing alpha-1,4-glucan chains and the subsequent attachment of the oligosaccharide to the alpha-1,6 position. The chain is 1,4-alpha-glucan branching enzyme GlgB from Shewanella sp. (strain MR-4).